Consider the following 596-residue polypeptide: MFALSKVLRRTQRLRLGACSAVFSKDIQLGGERSFDSNSIASTKREAVPRFYEISSLSNRALSSSAGTKSDQEEDDLEDGFSELEGSKSGQGSTSSDEDEGKLSADEEEEEELDLIETDVSRKTVEKKQSELFKTIVSAPGLSIGSALDKWVEEGNEITRVEIAKAMLQLRRRRMYGRALQMSEWLEANKKIEMTERDYASRLDLTVKIRGLEKGEACMQKIPKSFKGEVLYRTLLANCVAAGNVKKSELVFNKMKDLGFPLSGFTCDQMLLLHKRIDRKKIADVLLLMEKENIKPSLLTYKILIDVKGATNDISGMEQILETMKDEGVELDFQTQALTARHYSGAGLKDKAEKVLKEMEGESLEANRRAFKDLLSIYASLGREDEVKRIWKICESKPYFEESLAAIQAFGKLNKVQEAEAIFEKIVKMDRRASSSTYSVLLRVYVDHKMLSKGKDLVKRMAESGCRIEATTWDALIKLYVEAGEVEKADSLLDKASKQSHTKLMMNSFMYIMDEYSKRGDVHNTEKIFLKMREAGYTSRLRQFQALMQAYINAKSPAYGMRDRLKADNIFPNKSMAAQLAQGDPFKKTAISDILD.

The transit peptide at 1 to 69 (MFALSKVLRR…RALSSSAGTK (69 aa)) directs the protein to the mitochondrion. Positions 62 to 119 (LSSSAGTKSDQEEDDLEDGFSELEGSKSGQGSTSSDEDEGKLSADEEEEEELDLIETD) are disordered. 2 stretches are compositionally biased toward acidic residues: residues 72–82 (QEEDDLEDGFS) and 96–117 (SDEDEGKLSADEEEEEELDLIE). PPR repeat units follow at residues 228 to 262 (GEVLYRTLLANCVAAGNVKKSELVFNKMKDLGFPL), 263 to 296 (SGFTCDQMLLLHKRIDRKKIADVLLLMEKENIKP), 297 to 331 (SLLTYKILIDVKGATNDISGMEQILETMKDEGVEL), 332 to 366 (DFQTQALTARHYSGAGLKDKAEKVLKEMEGESLEA), 367 to 397 (NRRAFKDLLSIYASLGREDEVKRIWKICESK), 399 to 433 (YFEESLAAIQAFGKLNKVQEAEAIFEKIVKMDRRA), 434 to 468 (SSSTYSVLLRVYVDHKMLSKGKDLVKRMAESGCRI), 469 to 503 (EATTWDALIKLYVEAGEVEKADSLLDKASKQSHTK), and 505 to 539 (MMNSFMYIMDEYSKRGDVHNTEKIFLKMREAGYTS).

The protein belongs to the PPR family. P subfamily.

It is found in the mitochondrion. The sequence is that of Pentatricopeptide repeat-containing protein At1g80270, mitochondrial from Arabidopsis thaliana (Mouse-ear cress).